We begin with the raw amino-acid sequence, 358 residues long: Src kinase-associated phosphoprotein 2 (358 aa).

2 positions are modified to phosphoserine: serine 5 and serine 6. Positions 62-88 (ESQDKGDAEDGEEYDDPFAGPPDTISL) are disordered. Position 75 is a phosphotyrosine (tyrosine 75). Residues serine 87 and serine 90 each carry the phosphoserine modification. The region spanning 116–219 (FVLKAGYLEK…WVQQLNFVLQ (104 aa)) is the PH domain. 2 positions are modified to phosphotyrosine: tyrosine 151 and tyrosine 197. Residue serine 223 is modified to Phosphoserine. Positions 232 to 254 (ERGELYDDVDHPLPSSSPTRSLP) are disordered. Positions 243–253 (PLPSSSPTRSL) are enriched in low complexity. Residue tyrosine 260 is modified to Phosphotyrosine. 2 positions are modified to phosphoserine: serine 282 and serine 285. Positions 296-357 (NYANFYQGLW…PKAYVMEMYD (62 aa)) constitute an SH3 domain.

This sequence belongs to the SKAP family. Interacts with FYB1, which is required for SKAP2 protein stability. Interacts with PTPNS1. Part of a complex consisting of SKAP2, FYB1 and PTPNS1. Part of a complex consisting of SKAP2, FYB1 and LILRB3. Interacts with LAT, GRB2, PTK2B and PRAM1. May interact with actin. May interact with FYN, HCK and LYN. Interacts with FASLG.

Its subcellular location is the cytoplasm. Functionally, may be involved in B-cell and macrophage adhesion processes. In B-cells, may act by coupling the B-cell receptor (BCR) to integrin activation. May play a role in src signaling pathway. The polypeptide is Src kinase-associated phosphoprotein 2 (SKAP2) (Bos taurus (Bovine)).